Consider the following 266-residue polypeptide: Glucosamine-6-phosphate deaminase (266 aa).

Residue Asp-67 is the Proton acceptor; for enolization step of the active site. The active-site For ring-opening step is the Asn-139. Residue His-141 is the Proton acceptor; for ring-opening step of the active site. Residue Glu-146 is the For ring-opening step of the active site.

It belongs to the glucosamine/galactosamine-6-phosphate isomerase family. NagB subfamily. As to quaternary structure, homohexamer.

The enzyme catalyses alpha-D-glucosamine 6-phosphate + H2O = beta-D-fructose 6-phosphate + NH4(+). It functions in the pathway amino-sugar metabolism; N-acetylneuraminate degradation; D-fructose 6-phosphate from N-acetylneuraminate: step 5/5. Catalyzes the reversible isomerization-deamination of glucosamine 6-phosphate (GlcN6P) to form fructose 6-phosphate (Fru6P) and ammonium ion. This Marinomonas sp. (strain MWYL1) protein is Glucosamine-6-phosphate deaminase.